A 524-amino-acid chain; its full sequence is MEFSLLYIHTAILGLISLFLILHFVFWRLKSAKGGSAKNSLPPEAGGAWPIIGHLHLLSGSKLLHITLGSLADKCGPAFIIRLGVRQALVVSDWELAKELFTANDVAISSRPKLLAFESMSYDFAMFGFSPYGAYWRELRKLISVELLSTRRLELLKHIRVSETEISVKELYNLWKDKKNGSGHVLVEMKQWFGDLNLNVILRMVAGKRYFGTIDAKDQEEARRCQKAMSGFFHFTGLFLVADGFPFLRWMDLGGYEKKIKASAKEMDLIAEEWLQEHRRKRESGDVASEQDFMDLMLSLLEDVDLPGYDPDTITKATCINLILGGADTNTVMLTWTLSLLMNHPHILRKAQEELDIQVGKERRVNESDIANLEYLHAIVKETLRLYPASRLGGPREFSEDCTLGGYHVTKGTSLILNLWKLQRDPRIWSNPSEFRPERFLTTHKDLDVKGRYFELIPFGAGRRSCPGTAFGLQMLPFVLANLLHAFDISTDEKTDMTESPGLTTSKATPLDVLISPRLSPNLY.

A helical membrane pass occupies residues 6–26; that stretch reads LYIHTAILGLISLFLILHFVF. Cysteine 466 is a binding site for heme.

Belongs to the cytochrome P450 family. Heme serves as cofactor.

The protein localises to the membrane. The catalysed reaction is strychnine + reduced [NADPH--hemoprotein reductase] + O2 = 10-hydroxystrychnine + oxidized [NADPH--hemoprotein reductase] + H2O + H(+). It participates in alkaloid biosynthesis. In terms of biological role, monooxygenase involved in the biosynthesis of curare monoterpene indole alkaloids (MIAs), natural products such as strychnine, a neurotoxic compound used as a pesticide to control rodents, and its pharmacologically active derivatives, including brucine, used to regulate blood pressure. Curare alkaloids act as animal glycine receptor antagonists. Catalyzes the conversion of strychnine to 10-OH strychnine. The polypeptide is Strychnine-10-hydroxylase (Strychnos nux-vomica (Poison nut)).